Reading from the N-terminus, the 1819-residue chain is U3 small nucleolar RNA-associated protein 10 (1819 aa).

An HEAT 1 repeat occupies 583–620; sequence LDFQAILPFLLVALADPSERIRREAAAALAAIGGIYKK. 2 consecutive transmembrane segments (helical) span residues 945 to 965 and 1001 to 1021; these read IQSGMSYLLSLTLGSLLAIVN and ALLLVSGLSVIAPELVLHSVM. HEAT repeat units lie at residues 1045–1082, 1269–1306, 1313–1351, and 1775–1812; these read QTIDQVVPALIQSLRNQKRDVVSGTSELLLSFTAAFEH, LTLVDFLDTIEVLLQRPSDELRRKVLRLLEGRLRQNPE, IRVLDFLPTLVDIVRSSPDILLKHAAVACIDRIAEKYGK, and ALLPEMLPYISELMEDEDENVEREVRKWVKQIENVLGE.

This sequence belongs to the HEATR1/UTP10 family. In terms of assembly, component of the ribosomal small subunit (SSU) processome.

The protein resides in the nucleus. It is found in the nucleolus. It localises to the membrane. In terms of biological role, involved in nucleolar processing of pre-18S ribosomal RNA. Involved in ribosome biosynthesis. The protein is U3 small nucleolar RNA-associated protein 10 of Aspergillus clavatus (strain ATCC 1007 / CBS 513.65 / DSM 816 / NCTC 3887 / NRRL 1 / QM 1276 / 107).